The following is a 796-amino-acid chain: MSRRRHSDGDDGGQSHKRRRTSEPVEIEDRLESLICRVGEKSTSSLESNLEGLAGVLEADLPNYKNKILRILCAVARLLPEKLTVYTTLVGLLNARNYNFGGEFVEAMIRQLKETLKANLYTDALYLVRFLCDLVNCHVIAAPSMVAMFENFVSVTQEEDVPQVRSDWFVYAVLSSLPWVGKELDEKKDVEMDRLLNQIDGYLKRRLKTHVPMLQVWTAEKPHPQEEYLDCLYAQIQKLKKDRWQERHILRPYIAFDSVLCEALQHNLPPFTPPAHMPDCQYPMPRVIFRMFDYTDAPEGPVMPGSHSVERFVIEDNLHNIIKSHWKERKTCAAQLLSYPGKNKIPLNYHIVEVIFGELFQLPCPPHIDVMYTTLLIELCKLQPGSLPQVLAQATEMMYVRLDTMNTICIDRLLNWFSHHLSNFQFRWSWDDWVDCLALDADKPKPKFVKEVLEKCMRLSYHQRIVDIVPPTFSGLIPADPIFFYKYQDEANSALPGYAVAIAVGNAIKNRASNEEILTVLKDVPNPNQEDDDDEGEGFNPLKIEVFLQTLLHLAAKSFSHSFSALAKFHEILKALTDCDEGKLHILRVVYEVWKNHPQMVSVLVDKLIRTQIVDCAAVANWLFSPSMAHEFTRFYVWEILHSTIRKMNKHVQKIQKELEEAKDKLERQQHKKQKDSGDEEDMEKNSEDEDGQLEEQIERLQEKVESAQSEQKNLFLVIFQRFIMMLTEHLVRCETGSVDFSTPWYKNCIERLQQIFLMHHVTIQQYMGTLENLLFTAELDHHILAVYQQFCALQL.

Residues 1–26 (MSRRRHSDGDDGGQSHKRRRTSEPVE) are disordered. Residues 28–240 (EDRLESLICR…CLYAQIQKLK (213 aa)) enclose the MIF4G domain. Residues 641-719 (LHSTIRKMNK…SEQKNLFLVI (79 aa)) are a coiled coil. Positions 664–695 (DKLERQQHKKQKDSGDEEDMEKNSEDEDGQLE) are disordered. The span at 678–695 (GDEEDMEKNSEDEDGQLE) shows a compositional bias: acidic residues.

Belongs to the NCBP1 family. In terms of assembly, component of the nuclear cap-binding complex (CBC), a heterodimer composed of ncbp1/cbp80 and ncbp2/cbp20 that interacts with m7GpppG-capped RNA. Component of an alternative nuclear cap-binding complex (CBC) composed of ncbp1/cbp80 and ncbp3.

Its subcellular location is the nucleus. The protein resides in the cytoplasm. Its function is as follows. Component of the cap-binding complex (CBC), which binds cotranscriptionally to the 5'-cap of pre-mRNAs and is involved in various processes such as pre-mRNA splicing, translation regulation, nonsense-mediated mRNA decay, RNA-mediated gene silencing (RNAi) by microRNAs (miRNAs) and mRNA export. The CBC complex is involved in mRNA export from the nucleus, leading to the recruitment of the mRNA export machinery to the 5'-end of mRNA and to mRNA export in a 5' to 3' direction through the nuclear pore. The CBC complex is also involved in mediating U snRNA and intronless mRNAs export from the nucleus. The CBC complex is essential for a pioneer round of mRNA translation, before steady state translation when the CBC complex is replaced by cytoplasmic cap-binding protein eIF4E. The pioneer round of mRNA translation mediated by the CBC complex plays a central role in nonsense-mediated mRNA decay (NMD), NMD only taking place in mRNAs bound to the CBC complex, but not on eIF4E-bound mRNAs. The CBC complex enhances NMD in mRNAs containing at least one exon-junction complex (EJC), promoting the interaction between UPF1 and UPF2. The CBC complex is also involved in 'failsafe' NMD, which is independent of the EJC complex, while it does not participate in Staufen-mediated mRNA decay (SMD). During cell proliferation, the CBC complex is also involved in microRNAs (miRNAs) biogenesis via its interaction with SRRT/ARS2 and is required for miRNA-mediated RNA interference. The CBC complex also acts as a negative regulator of parn, thereby acting as an inhibitor of mRNA deadenylation. In the CBC complex, ncbp1/cbp80 does not bind directly capped RNAs (m7GpppG-capped RNA) but is required to stabilize the movement of the N-terminal loop of ncbp2/cbp20 and lock the CBC into a high affinity cap-binding state with the cap structure. Associates with NCBP3 to form an alternative cap-binding complex (CBC) which plays a key role in mRNA export. The conventional CBC with NCBP2 binds both small nuclear RNA (snRNA) and messenger (mRNA) and is involved in their export from the nucleus whereas the alternative CBC with NCBP3 does not bind snRNA and associates only with mRNA thereby playing a role only in mRNA export. The sequence is that of Nuclear cap-binding protein subunit 1 (ncbp1) from Salmo salar (Atlantic salmon).